The following is a 191-amino-acid chain: Cytochrome c biogenesis ATP-binding export protein CcmA (191 aa).

Residues 2–190 (LSLHQLQFKN…SIKSAQILRI (189 aa)) form the ABC transporter domain. Residue 29–36 (GANGCGKS) coordinates ATP.

This sequence belongs to the ABC transporter superfamily. CcmA exporter (TC 3.A.1.107) family. In terms of assembly, the complex is composed of two ATP-binding proteins (CcmA) and two transmembrane proteins (CcmB).

Its subcellular location is the cell inner membrane. It catalyses the reaction heme b(in) + ATP + H2O = heme b(out) + ADP + phosphate + H(+). In terms of biological role, part of the ABC transporter complex CcmAB involved in the biogenesis of c-type cytochromes; once thought to export heme, this seems not to be the case, but its exact role is uncertain. Responsible for energy coupling to the transport system. The polypeptide is Cytochrome c biogenesis ATP-binding export protein CcmA (Rickettsia conorii (strain ATCC VR-613 / Malish 7)).